Reading from the N-terminus, the 303-residue chain is Cysteine synthase B (303 aa).

K41 carries the post-translational modification N6-(pyridoxal phosphate)lysine. Pyridoxal 5'-phosphate is bound by residues N71, G174 to T178, and S255.

The protein belongs to the cysteine synthase/cystathionine beta-synthase family. As to quaternary structure, homodimer. Pyridoxal 5'-phosphate is required as a cofactor.

The catalysed reaction is O-acetyl-L-serine + hydrogen sulfide = L-cysteine + acetate. Its pathway is amino-acid biosynthesis; L-cysteine biosynthesis; L-cysteine from L-serine: step 2/2. Functionally, two cysteine synthase enzymes are found. Both catalyze the same reaction. Cysteine synthase B can also use thiosulfate in place of sulfide to give cysteine thiosulfonate as a product. The protein is Cysteine synthase B (cysM) of Escherichia coli (strain K12).